Here is a 759-residue protein sequence, read N- to C-terminus: Pseudocleavage protein nop-1 (759 aa).

Disordered regions lie at residues 1-46 (MSAP…SSIF), 334-361 (KIFP…MDKK), 379-413 (LSVN…NLSQ), 440-495 (QSSR…KKER), and 732-759 (ESDG…GAKI). The segment covering 10–42 (DIHSDDRDHADHQTKKEKHWFEEKSEQNGENRR) has biased composition (basic and acidic residues). Residues 448-465 (TGNSSISSGVGSIASGTS) show a composition bias toward low complexity. The span at 473-482 (GSRSGQSISR) shows a compositional bias: polar residues. Over residues 485–495 (SRRDDEGKKER) the composition is skewed to basic and acidic residues. A compositionally biased stretch (polar residues) spans 736–759 (PASSNDDFDTQSTASTSTVFGAKI).

The protein resides in the nucleus. The protein localises to the cytoplasm. It localises to the cell cortex. It is found in the cleavage furrow. In terms of biological role, required for formation of the pseudocleavage furrow during the first cleavage of the embryo and also mediates aster-induced furrowing during cytokinesis. Promotes cortical recruitment of ani-1 and nmy-2 during pseudocleavage and cytokinesis and promotes the accumulation of actin at furrowing regions. Regulates establishment of embryonic cell polarity. The protein is Pseudocleavage protein nop-1 (nop-1) of Caenorhabditis elegans.